The following is a 602-amino-acid chain: Leucine-rich repeat-containing protein 40 (602 aa).

S71 carries the post-translational modification Phosphoserine. LRR repeat units follow at residues 83–104 (DLTK…LRLL), 106–127 (ALTV…IREL), 129–150 (NLQK…ITNL), 152–173 (NLKC…FEQL), 175–196 (NLED…FSSL), 198–219 (SLVR…INRM), 221–242 (RLKH…LAGM), 244–265 (SLEL…PSCS), 266–286 (LLKE…EHLK), 290–311 (SILV…IILL), 313–335 (SLER…GNLH), 336–356 (LKFL…IISK), 400–421 (TLKI…VFDA), 426–447 (IVTS…MVEL), 450–472 (MVSD…CVLQ), 473–494 (KLTF…MESL), 496–517 (RLQT…LYRI), 519–540 (TLET…KMKM), 543–564 (NLTT…LGNC), and 566–586 (NLRT…AILM).

The polypeptide is Leucine-rich repeat-containing protein 40 (LRRC40) (Homo sapiens (Human)).